Here is a 150-residue protein sequence, read N- to C-terminus: Large ribosomal subunit protein bL9 (150 aa).

It belongs to the bacterial ribosomal protein bL9 family.

Binds to the 23S rRNA. In Ralstonia pickettii (strain 12J), this protein is Large ribosomal subunit protein bL9.